The chain runs to 474 residues: Glutathione synthetase (474 aa).

Residue R125 participates in substrate binding. E144 lines the ATP pocket. Mg(2+) contacts are provided by E144 and N146. Substrate contacts are provided by residues 148–151 (IAAS), 214–216 (QRN), Q220, and 267–270 (RTGY). Residues K305, 364–373 (KPQREGGGNN), Y375, 398–401 (MDKI), and E425 each bind ATP. Mg(2+) is bound at residue E368. Residue R450 participates in substrate binding. The ATP site is built by K452 and D458. Residue 461 to 462 (VA) coordinates substrate.

Belongs to the eukaryotic GSH synthase family. In terms of assembly, homodimer. Mg(2+) is required as a cofactor. Expressed ubiquitously.

The enzyme catalyses gamma-L-glutamyl-L-cysteine + glycine + ATP = glutathione + ADP + phosphate + H(+). The catalysed reaction is gamma-L-glutamyl-(2S)-2-aminobutanoate + glycine + ATP = ophthalmate + ADP + phosphate + H(+). It functions in the pathway sulfur metabolism; glutathione biosynthesis; glutathione from L-cysteine and L-glutamate: step 2/2. Its function is as follows. Catalyzes the production of glutathione from gamma-glutamylcysteine and glycine in an ATP-dependent manner. Glutathione (gamma-glutamylcysteinylglycine, GSH) is the most abundant intracellular thiol in living aerobic cells and is required for numerous processes including the protection of cells against oxidative damage, amino acid transport, the detoxification of foreign compounds, the maintenance of protein sulfhydryl groups in a reduced state and acts as a cofactor for a number of enzymes. Participates in ophthalmate biosynthesis in hepatocytes. The protein is Glutathione synthetase of Xenopus laevis (African clawed frog).